Here is a 459-residue protein sequence, read N- to C-terminus: Glutathione reductase (459 aa).

Residues Ser-14, Gly-15, Glu-34, Thr-41, Cys-42, Lys-50, and Ala-114 each coordinate FAD. Position 14 (Ser-14) interacts with glutathione. Cys-42 and Cys-47 are oxidised to a cystine. 5 residues coordinate NADP(+): Ile-177, Glu-180, Arg-197, Lys-203, and Gly-262. Asp-313 and Thr-321 together coordinate FAD. Glutathione is bound at residue Arg-329. Ala-351 contacts NADP(+). Residue His-448 participates in FAD binding. His-448 functions as the Proton acceptor in the catalytic mechanism.

It belongs to the class-I pyridine nucleotide-disulfide oxidoreductase family. In terms of assembly, homodimer. It depends on FAD as a cofactor.

Its subcellular location is the cytoplasm. The enzyme catalyses 2 glutathione + NADP(+) = glutathione disulfide + NADPH + H(+). In terms of biological role, catalyzes the reduction of glutathione disulfide (GSSG) to reduced glutathione (GSH). Constitutes the major mechanism to maintain a high GSH:GSSG ratio in the cytosol. This is Glutathione reductase (gor) from Nostoc sp. (strain PCC 7120 / SAG 25.82 / UTEX 2576).